The primary structure comprises 139 residues: Cofilin (139 aa).

Positions 4-135 (GVKVSQECLD…SYDTVLDKVS (132 aa)) constitute an ADF-H domain.

Belongs to the actin-binding proteins ADF family.

The protein resides in the cytoplasm. It localises to the cytoskeleton. The protein localises to the nucleus matrix. Functionally, controls reversibly actin polymerization and depolymerization in a pH-sensitive manner. It has the ability to bind G- and F-actin in a 1:1 ratio of cofilin to actin. Binding to F-actin is regulated by tropomyosin. It is the major component of intranuclear and cytoplasmic actin rods. Required for accumulation of actin at the cell division site via depolymerizing actin at the cell ends. In association with myosin II has a role in the assembly of the contractile ring via severing actin filaments. Involved in the maintenance of the contractile ring once formed. In association with profilin and capping protein, has a role in the mitotic reorganization of the actin cytoskeleton. This chain is Cofilin (COF1), found in Mycosarcoma maydis (Corn smut fungus).